Here is a 392-residue protein sequence, read N- to C-terminus: Phosphoglycerate kinase (392 aa).

Substrate contacts are provided by residues 21–23 (DLN), R36, 59–62 (HLGR), R113, and R146. Residues K197, E319, and 345–348 (GGDT) each bind ATP.

This sequence belongs to the phosphoglycerate kinase family. As to quaternary structure, monomer.

It is found in the cytoplasm. It catalyses the reaction (2R)-3-phosphoglycerate + ATP = (2R)-3-phospho-glyceroyl phosphate + ADP. Its pathway is carbohydrate degradation; glycolysis; pyruvate from D-glyceraldehyde 3-phosphate: step 2/5. This Nitrosococcus oceani (strain ATCC 19707 / BCRC 17464 / JCM 30415 / NCIMB 11848 / C-107) protein is Phosphoglycerate kinase.